Reading from the N-terminus, the 172-residue chain is 3-phenylpropionate/cinnamic acid dioxygenase subunit beta (172 aa).

This sequence belongs to the bacterial ring-hydroxylating dioxygenase beta subunit family. As to quaternary structure, this dioxygenase system consists of four proteins: the two subunits of the hydroxylase component (HcaE and HcaF), a ferredoxin (HcaC) and a ferredoxin reductase (HcaD).

The enzyme catalyses 3-phenylpropanoate + NADH + O2 + H(+) = 3-(cis-5,6-dihydroxycyclohexa-1,3-dien-1-yl)propanoate + NAD(+). The catalysed reaction is (E)-cinnamate + NADH + O2 + H(+) = (2E)-3-(cis-5,6-dihydroxycyclohexa-1,3-dien-1-yl)prop-2-enoate + NAD(+). It functions in the pathway aromatic compound metabolism; 3-phenylpropanoate degradation. In terms of biological role, part of the multicomponent 3-phenylpropionate dioxygenase. Converts 3-phenylpropionic acid (PP) and cinnamic acid (CI) into 3-phenylpropionate-dihydrodiol (PP-dihydrodiol) and cinnamic acid-dihydrodiol (CI-dihydrodiol), respectively. The sequence is that of 3-phenylpropionate/cinnamic acid dioxygenase subunit beta from Escherichia coli O139:H28 (strain E24377A / ETEC).